The primary structure comprises 363 residues: Dihydroorotate dehydrogenase (quinone) (363 aa).

FMN is bound by residues 62–66 and Thr-86; that span reads AGFDK. Substrate is bound at residue Lys-66. 111–115 provides a ligand contact to substrate; sequence NRMGF. Asn-142 and Asn-175 together coordinate FMN. Asn-175 is a substrate binding site. Catalysis depends on Ser-178, which acts as the Nucleophile. Asn-180 lines the substrate pocket. 2 residues coordinate FMN: Lys-216 and Thr-244. 245–246 lines the substrate pocket; that stretch reads NT. Residues Gly-267, Gly-296, and 317–318 each bind FMN; that span reads YT.

Belongs to the dihydroorotate dehydrogenase family. Type 2 subfamily. Monomer. It depends on FMN as a cofactor.

The protein localises to the cell membrane. It catalyses the reaction (S)-dihydroorotate + a quinone = orotate + a quinol. Its pathway is pyrimidine metabolism; UMP biosynthesis via de novo pathway; orotate from (S)-dihydroorotate (quinone route): step 1/1. Functionally, catalyzes the conversion of dihydroorotate to orotate with quinone as electron acceptor. This is Dihydroorotate dehydrogenase (quinone) from Anaeromyxobacter sp. (strain Fw109-5).